Consider the following 427-residue polypeptide: Acetyl-CoA acetyltransferase, mitochondrial (427 aa).

The N-terminal 33 residues, 1 to 33 (MAVLAALLRSGARSRSPLLRRLVQEIRYVERSY), are a transit peptide targeting the mitochondrion. N6-acetyllysine; alternate is present on lysine 66. Lysine 66 bears the N6-succinyllysine; alternate mark. At lysine 78 the chain carries N6-succinyllysine. Residue cysteine 126 is the Acyl-thioester intermediate of the active site. An N6-acetyllysine; alternate mark is found at lysine 174, lysine 181, lysine 190, and lysine 202. Lysine 174, lysine 181, lysine 190, and lysine 202 each carry N6-succinyllysine; alternate. Residue tyrosine 219 participates in CoA binding. Tyrosine 219 is a binding site for K(+). N6-acetyllysine; alternate is present on residues lysine 223 and lysine 230. Residues lysine 223 and lysine 230 each carry the N6-succinyllysine; alternate modification. Lysine 243 is modified (N6-succinyllysine). Lysine 251 and lysine 257 each carry N6-acetyllysine. CoA contacts are provided by residues 258-260 (RVD) and lysine 263. At lysine 263 the chain carries N6-acetyllysine; alternate. Lysine 263 carries the post-translational modification N6-succinyllysine; alternate. N6-succinyllysine is present on residues lysine 266 and lysine 268. Lysine 273 is subject to N6-acetyllysine. Residues alanine 280, alanine 281, and alanine 283 each contribute to the K(+) site. Serine 284 contacts CoA. At lysine 338 the chain carries N6-acetyllysine. Valine 381 provides a ligand contact to K(+). The active-site Proton donor/acceptor is cysteine 413.

This sequence belongs to the thiolase-like superfamily. Thiolase family. As to quaternary structure, homotetramer. Post-translationally, succinylation at Lys-268, adjacent to a coenzyme A binding site. Desuccinylated by SIRT5.

Its subcellular location is the mitochondrion. The catalysed reaction is 2 acetyl-CoA = acetoacetyl-CoA + CoA. It carries out the reaction propanoyl-CoA + acetyl-CoA = 2-methyl-3-oxobutanoyl-CoA + CoA. It participates in lipid metabolism; fatty acid beta-oxidation. With respect to regulation, activated by potassium ions, but not sodium ions. Functionally, this is one of the enzymes that catalyzes the last step of the mitochondrial beta-oxidation pathway, an aerobic process breaking down fatty acids into acetyl-CoA. Using free coenzyme A/CoA, catalyzes the thiolytic cleavage of medium- to long-chain 3-oxoacyl-CoAs into acetyl-CoA and a fatty acyl-CoA shortened by two carbon atoms. The activity of the enzyme is reversible and it can also catalyze the condensation of two acetyl-CoA molecules into acetoacetyl-CoA. Thereby, it plays a major role in ketone body metabolism. The sequence is that of Acetyl-CoA acetyltransferase, mitochondrial (ACAT1) from Homo sapiens (Human).